We begin with the raw amino-acid sequence, 365 residues long: Protein BIIDXI (365 aa).

The signal sequence occupies residues 1–21 (MKEMGVIVLLLLHSFFYVAFC). 3 N-linked (GlcNAc...) asparagine glycosylation sites follow: Asn48, Asn121, and Asn208.

Interacts with PME3. As to expression, mainly expressed in vascular tissues of roots, leaves, stamens and petals.

The protein resides in the secreted. The protein localises to the cell wall. Functionally, together with At5g11420, acts as a positive regulator of PME3 activity during several developmental processes, including reproductive organ development, hypocotyls elongation, seed germination and endosperm (testa) rupture at the micropyle, probably by modulating the pectin methylation status in cell walls. Involved in the regulation of pectin methylation degree to modulate cell wall physiology during cell separation, hypocotyl growth and embryo development. Required during embryo development, especially to regulate homogalacturonans (HG) methyl esterification in endosperm cell walls, a process related to embryo bending. Also implicated in hypocotyl growth and gravitropic response via the regulation of auxin efflux. Also regulates cell wall pectin upon root-knot nematode Meloidogyne incognita infection. In Arabidopsis thaliana (Mouse-ear cress), this protein is Protein BIIDXI.